The sequence spans 165 residues: uncharacterized protein (165 aa).

6 consecutive transmembrane segments (helical) span residues 6 to 26 (ILFPCLLLAASVYAWLESGQA), 28 to 48 (LFSGQDQWPVLLMLLGAAFVY), 54 to 74 (AVTPHFFIGLLLFGIGLHFFA), 78 to 98 (WVWWPDDFEMLLFMIGFSLLV), 110 to 130 (AVSMICFSLFLYFFKQIMAWL), and 138 to 158 (ALLKEYWPFVFIGISLLLLLI).

It localises to the cell membrane. This is an uncharacterized protein from Bacillus subtilis (strain 168).